The sequence spans 604 residues: 2-isopropylmalate synthase 2, mitochondrial (604 aa).

The N-terminal 50 residues, 1-50, are a transit peptide targeting the mitochondrion; the sequence is MVKHSFIALAEHASKLRRSIPPVKLTYKNMLRDPSVKYRAFAPPKMVKRI. Residues 60 to 335 enclose the Pyruvate carboxyltransferase domain; the sequence is PRWLSTDLRD…SPNLDFSDLT (276 aa). Residues Asp-69, His-274, His-276, and Asn-310 each coordinate a divalent metal cation.

Belongs to the alpha-IPM synthase/homocitrate synthase family. LeuA type 2 subfamily. Homodimer. It depends on a divalent metal cation as a cofactor.

The protein localises to the mitochondrion. It catalyses the reaction 3-methyl-2-oxobutanoate + acetyl-CoA + H2O = (2S)-2-isopropylmalate + CoA + H(+). The protein operates within amino-acid biosynthesis; L-leucine biosynthesis; L-leucine from 3-methyl-2-oxobutanoate: step 1/4. Its function is as follows. Catalyzes the condensation of the acetyl group of acetyl-CoA with 3-methyl-2-oxobutanoate (2-oxoisovalerate) to form 3-carboxy-3-hydroxy-4-methylpentanoate (2-isopropylmalate). Redundant to LEU4, responsible for about 20% of alpha-IPMS activity. Involved in leucine synthesis. The polypeptide is 2-isopropylmalate synthase 2, mitochondrial (Saccharomyces cerevisiae (strain ATCC 204508 / S288c) (Baker's yeast)).